The following is a 1073-amino-acid chain: Guanylyl cyclase C (1073 aa).

The first 23 residues, 1–23 (MKTPLLALALWSLLLQLGLTFWP), serve as a signal peptide directing secretion. Over 24–433 (SSVSQNCHNG…IPGRGPQILM (410 aa)) the chain is Extracellular. N-linked (GlcNAc...) asparagine glycans are attached at residues asparagine 32, asparagine 43, asparagine 79, asparagine 195, asparagine 284, asparagine 307, and asparagine 402. The helical transmembrane segment at 434–454 (IAVFTLTGTIVLLLLIALLVL) threads the bilayer. Topologically, residues 455–1073 (RKYKREYALR…NTTDNESTHF (619 aa)) are cytoplasmic. A Protein kinase domain is found at 489–749 (LKIDDDRRRD…KIENTLAKIF (261 aa)). Positions 824-954 (TIYFSDIVGF…DTVNTASRME (131 aa)) constitute a Guanylate cyclase domain.

Belongs to the adenylyl cyclase class-4/guanylyl cyclase family. As to quaternary structure, homotrimer. Interacts via its C-terminal region with NHERF4. Interacts with the lectin chaperone VIP36. Post-translationally, glycosylation at Asn-79 is required for interaction with VIP36 while glycosylation at Asn-402 modulates ligand-mediated GC-C activation.

Its subcellular location is the cell membrane. The protein resides in the endoplasmic reticulum membrane. It catalyses the reaction GTP = 3',5'-cyclic GMP + diphosphate. In terms of biological role, guanylyl cyclase that catalyzes synthesis of cyclic GMP (cGMP) from GTP. This chain is Guanylyl cyclase C (GUCY2C), found in Sus scrofa (Pig).